We begin with the raw amino-acid sequence, 304 residues long: MRLPIFLDTDPGIDDAVAIAAAIFAPELDLQLMTTVAGNVSVEKTTRNALQLLHFWNAEIPLAQGAAVPLVRAPRDAASVHGESGMAGYDFVEHNRKPLGIPAFLAIRDALMRAPEPVTLVAIGPLTNIALLLSQCPECKPYIRRLVIMGGSAGRGNCTPNAEFNIAADPEAAACVFRSGIEIVMCGLDVTNQAILTPDYLSTLPQLNRTGKMLHALFSHYRSGSMQSGLRMHDLCAIAWLVRPDLFTLKPCFVAVETQGEFTSGTTVVDIDGCLGKPANVQVALDLDVKGFQQWVAEVLALAS.

H233 is an active-site residue.

Belongs to the IUNH family. RihC subfamily.

In terms of biological role, hydrolyzes both purine and pyrimidine ribonucleosides with a broad-substrate specificity. The protein is Non-specific ribonucleoside hydrolase RihC of Escherichia coli (strain 55989 / EAEC).